The chain runs to 3393 residues: Genome polyprotein (3393 aa).

At 1–91 (MVNPKGVNVM…GVSRRKKRRS (91 aa)) the chain is on the cytoplasmic side. The tract at residues 28-60 (VSRGLRGFVLFVLTQLFMGRKLTPNVRRLWKSS) is hydrophobic; homodimerization of capsid protein C. Residues 91 to 108 (SATTSGTVFMAMLGLTLA) constitute a propeptide, ER anchor for the capsid protein C, removed in mature form by serine protease NS3. The chain crosses the membrane as a helical span at residues 92-112 (ATTSGTVFMAMLGLTLAASVA). Residues 113–231 (RHAHHTLINI…FETQVQKVEK (119 aa)) are Extracellular-facing. N-linked (GlcNAc...) asparagine; by host glycosylation is found at Asn-121 and Asn-137. The chain crosses the membrane as a helical span at residues 232–252 (WIIRNPTYAIAAILMSWYIGN). Over 253 to 257 (SLKQR) the chain is Cytoplasmic. Residues 258–272 (VVLLLLTLALGPAYA) traverse the membrane as a helical segment. The Extracellular segment spans residues 273–713 (THCVGIPKRD…IHTVFGTAFH (441 aa)). Disulfide bonds link Cys-275–Cys-302, Cys-346–Cys-377, Cys-364–Cys-388, Cys-453–Cys-553, and Cys-570–Cys-600. Residues 370–383 (DRGWGNGCGLFGKG) form a fusion peptide region. The chain crosses the membrane as a helical span at residues 714-734 (GIFGGLSWMTRILIGVLLVWL). The Cytoplasmic segment spans residues 735–745 (GLNSRNGTATT). A helical membrane pass occupies residues 746–763 (LMMLTGFIILFLSLGVGA). Residues 764 to 1112 (EVGCSVNWGQ…TPEKHLVRSW (349 aa)) lie on the Extracellular side of the membrane. 8 disulfide bridges follow: Cys-767-Cys-778, Cys-818-Cys-905, Cys-941-Cys-986, Cys-1043-Cys-1092, Cys-1054-Cys-1075, Cys-1054-Cys-1076, Cys-1075-Cys-1079, and Cys-1076-Cys-1079. 2 N-linked (GlcNAc...) asparagine; by host glycosylation sites follow: Asn-893 and Asn-970. A helical transmembrane segment spans residues 1113 to 1133 (VTAGDSYPAWSIGLVAMFLFV). At 1134–1186 (DIMARSRPTRKMMIGGTMLLLAIMIMGELSYLDLLRYIIVVGEHFIERENGGD) the chain is on the cytoplasmic side. The chain crosses the membrane as a helical span at residues 1187–1207 (VAYMAIMAASHLRPGLMAMVF). The Lumenal segment spans residues 1208 to 1283 (AKSMWSPKQR…PVSMPVIRKA (76 aa)). A helical transmembrane segment spans residues 1284 to 1304 (SMIIGTGGLLLSLWKGGGSSM). Over 1305–1341 (RKGLPLFAASAARVLGLTKAHLSVLFILLITKNGKRT) the chain is Cytoplasmic. The helical transmembrane segment at 1342–1362 (WPISECLAAVGIFGAAFGTMF) threads the bilayer. At 1363–1365 (SED) the chain is on the lumenal side. A helical membrane pass occupies residues 1366-1386 (ETLLGPLALVGVVLIVYTMFT). Over 1387–1438 (QSDGLELVKAADISWSDEAVVSGEARRFDVALNDSGEFKLLDEPPVSWLNVS) the chain is Cytoplasmic. The tract at residues 1393–1432 (LVKAADISWSDEAVVSGEARRFDVALNDSGEFKLLDEPPV) is interacts with and activates NS3 protease. The helical intramembrane region spans 1439-1459 (FLVVAIVASSLHPIALVVTLV). Residues 1460 to 2137 (AWTYWRTEKR…KLALQQAPEA (678 aa)) lie on the Cytoplasmic side of the membrane. The Peptidase S7 domain occupies 1470–1649 (SGVLWDVPLA…QPGSVAEVET (180 aa)). Residues His-1521, Asp-1545, and Ser-1606 each act as charge relay system; for serine protease NS3 activity in the active site. Positions 1653–1809 (DKMLRKGEFT…ESNAEIEDVK (157 aa)) constitute a Helicase ATP-binding domain. Positions 1657–1660 (RKGE) are important for RNA-binding. ATP is bound at residue 1666-1673 (YHPGAGKT). Residues 1757-1760 (DEAH) carry the DEAH box motif. A Helicase C-terminal domain is found at 1804–1984 (EIEDVKKEIP…VAPLYEEEAS (181 aa)). The chain crosses the membrane as a helical span at residues 2138 to 2158 (VSTLLLLGMMAICTLGLVILL). The Lumenal segment spans residues 2159-2168 (MKPKATDKMS). Positions 2169-2184 (MAMVTMAITGYLLKLG) form an intramembrane region, helical. A topological domain (lumenal) is located at residue Gly-2185. A helical membrane pass occupies residues 2186-2206 (MTHAQVGGILLVFFIMMVVII). The Cytoplasmic segment spans residues 2207 to 2221 (PESGTQRSINDNKLA). Residues 2222-2236 (YVIILVGLVIGGVAC) traverse the membrane as a helical segment. At 2237-2275 (NELGWLEKTKADLFGNNMTHAQTVVLPTINWNWLDFRPG) the chain is on the lumenal side. The helical intramembrane region spans 2276-2296 (AAWSLYVGMATFLTPVFVHWI). Over 2297 to 2344 (KNEYGNASLTGITPTAGILGALNQGVPFVKLNTSVGVLLLSVWNNFTT) the chain is Lumenal. A helical membrane pass occupies residues 2345 to 2365 (SSMLAAMVMLACHCLFVLPGV). Residues 2366 to 2408 (RAQCLREAQIRVFHGVAKNPMVDGNPTVDLEKENDMPDLYEKK) are Cytoplasmic-facing. A helical membrane pass occupies residues 2409–2429 (LALVALGMAAVLNAAMVRTAL). The Lumenal portion of the chain corresponds to 2430 to 2457 (TTAEMVVLGSAAVGPLLEGNTSAFWNGP). A helical membrane pass occupies residues 2458–2478 (LAVAVAGVMRGNHYALIGIVY). At 2479–3393 (NLWLLKTARR…QRCSAYGELL (915 aa)) the chain is on the cytoplasmic side. The 265-residue stretch at 2489 to 2753 (GGSSALTYGE…DLIYPTGTRS (265 aa)) folds into the mRNA cap 0-1 NS5-type MT domain. Ser-2544 is an S-adenosyl-L-methionine binding site. Ser-2544 bears the Phosphoserine mark. The active-site For 2'-O-MTase activity is Lys-2549. S-adenosyl-L-methionine is bound by residues Gly-2574, Trp-2575, Thr-2592, Leu-2593, Asp-2619, and Ile-2620. Asp-2634 (for 2'-O-MTase activity) is an active-site residue. Ile-2635 lines the S-adenosyl-L-methionine pocket. Active-site for 2'-O-MTase activity residues include Lys-2670 and Glu-2706. Tyr-2708 lines the S-adenosyl-L-methionine pocket. The Nuclear localization signal motif lies at 2860–2893 (REIMKVVNQWLFDYLGRTKQPRICTKEEFINKVR). Positions 2927, 2931, 2936, and 2939 each coordinate Zn(2+). In terms of domain architecture, RdRp catalytic spans 3017–3169 (GLVYADDTAG…APVDESFAGA (153 aa)). The Zn(2+) site is built by His-3204, Cys-3220, and Cys-3339.

The protein in the N-terminal section; belongs to the class I-like SAM-binding methyltransferase superfamily. mRNA cap 0-1 NS5-type methyltransferase family. As to quaternary structure, homodimer. Interacts (via N-terminus) with host EXOC1 (via C-terminus); this interaction results in EXOC1 degradation through the proteasome degradation pathway. Forms heterodimers with envelope protein E in the endoplasmic reticulum and Golgi. In terms of assembly, homodimer; in the endoplasmic reticulum and Golgi. Interacts with protein prM. Interacts with non-structural protein 1. As to quaternary structure, homodimer; Homohexamer when secreted. Interacts with envelope protein E. Interacts (via N-terminus) with serine protease NS3. In terms of assembly, forms a heterodimer with serine protease NS3. May form homooligomers. As to quaternary structure, forms a heterodimer with NS2B. Interacts with non-structural protein 2A (via N-terminus). Interacts with NS4B. Interacts with unphosphorylated RNA-directed RNA polymerase NS5; this interaction stimulates RNA-directed RNA polymerase NS5 guanylyltransferase activity. NS3 interacts with host PDCD6IP; this interaction contributes to virion release. Interacts with serine protease NS3. In terms of assembly, homodimer. Interacts with host STAT2; this interaction prevents the establishment of cellular antiviral state. Interacts with host TRIM23; this interaction leads to NS5 ubiquitination. Post-translationally, specific enzymatic cleavages in vivo yield mature proteins. The nascent capsid protein C contains a C-terminal hydrophobic domain that act as a signal sequence for translocation of prM into the lumen of the ER. Mature capsid protein C is cleaved at a site upstream of this hydrophobic domain by NS3. prM is cleaved in post-Golgi vesicles by a host furin, releasing the mature small envelope protein M, and peptide pr. Non-structural protein 2A-alpha, a C-terminally truncated form of non-structural protein 2A, results from partial cleavage by NS3. Specific enzymatic cleavages in vivo yield mature proteins peptide 2K acts as a signal sequence and is removed from the N-terminus of NS4B by the host signal peptidase in the ER lumen. Signal cleavage at the 2K-4B site requires a prior NS3 protease-mediated cleavage at the 4A-2K site. In terms of processing, cleaved in post-Golgi vesicles by a host furin, releasing the mature small envelope protein M, and peptide pr. This cleavage is incomplete as up to 30% of viral particles still carry uncleaved prM. N-glycosylated. Post-translationally, N-glycosylated. The excreted form is glycosylated and this is required for efficient secretion of the protein from infected cells. In terms of processing, polyubiquitinated; ubiquitination is probably mediated by host TRIM23 and is prerequisite for NS5-STAT2 interaction. NS5 is not ISGylated or sumoylated. Phosphorylated on serines residues. This phosphorylation may trigger NS5 nuclear localization.

It is found in the virion. The protein resides in the host nucleus. The protein localises to the host cytoplasm. Its subcellular location is the host perinuclear region. It localises to the secreted. It is found in the virion membrane. The protein resides in the host endoplasmic reticulum membrane. It carries out the reaction Selective hydrolysis of -Xaa-Xaa-|-Yaa- bonds in which each of the Xaa can be either Arg or Lys and Yaa can be either Ser or Ala.. The catalysed reaction is RNA(n) + a ribonucleoside 5'-triphosphate = RNA(n+1) + diphosphate. The enzyme catalyses a ribonucleoside 5'-triphosphate + H2O = a ribonucleoside 5'-diphosphate + phosphate + H(+). It catalyses the reaction ATP + H2O = ADP + phosphate + H(+). It carries out the reaction a 5'-end (5'-triphosphoguanosine)-ribonucleoside in mRNA + S-adenosyl-L-methionine = a 5'-end (N(7)-methyl 5'-triphosphoguanosine)-ribonucleoside in mRNA + S-adenosyl-L-homocysteine. The catalysed reaction is a 5'-end (N(7)-methyl 5'-triphosphoguanosine)-ribonucleoside in mRNA + S-adenosyl-L-methionine = a 5'-end (N(7)-methyl 5'-triphosphoguanosine)-(2'-O-methyl-ribonucleoside) in mRNA + S-adenosyl-L-homocysteine + H(+). Functionally, plays a role in virus budding by binding to the cell membrane and gathering the viral RNA into a nucleocapsid that forms the core of a mature virus particle. During virus entry, may induce genome penetration into the host cytoplasm after hemifusion induced by the surface proteins. Can migrate to the cell nucleus where it modulates host functions. Inhibits RNA silencing by interfering with host Dicer. In terms of biological role, prevents premature fusion activity of envelope proteins in trans-Golgi by binding to envelope protein E at pH6.0. After virion release in extracellular space, gets dissociated from E dimers. Its function is as follows. Acts as a chaperone for envelope protein E during intracellular virion assembly by masking and inactivating envelope protein E fusion peptide. prM is the only viral peptide matured by host furin in the trans-Golgi network probably to avoid catastrophic activation of the viral fusion activity in acidic Golgi compartment prior to virion release. prM-E cleavage is inefficient, and many virions are only partially matured. These uncleaved prM would play a role in immune evasion. Functionally, may play a role in virus budding. Exerts cytotoxic effects by activating a mitochondrial apoptotic pathway through M ectodomain. May display a viroporin activity. Binds to host cell surface receptor and mediates fusion between viral and cellular membranes. Envelope protein is synthesized in the endoplasmic reticulum in the form of heterodimer with protein prM. They play a role in virion budding in the ER, and the newly formed immature particle is covered with 60 spikes composed of heterodimer between precursor prM and envelope protein E. The virion is transported to the Golgi apparatus where the low pH causes dissociation of PrM-E heterodimers and formation of E homodimers. prM-E cleavage is inefficient, and many virions are only partially matured. These uncleaved prM would play a role in immune evasion. In terms of biological role, involved in immune evasion, pathogenesis and viral replication. Once cleaved off the polyprotein, is targeted to three destinations: the viral replication cycle, the plasma membrane and the extracellular compartment. Essential for viral replication. Required for formation of the replication complex and recruitment of other non-structural proteins to the ER-derived membrane structures. Excreted as a hexameric lipoparticle that plays a role against host immune response. Antagonizing the complement function. Binds to the host macrophages and dendritic cells. Inhibits signal transduction originating from Toll-like receptor 3 (TLR3). Its function is as follows. Component of the viral RNA replication complex that functions in virion assembly and antagonizes the host immune response. Functionally, required cofactor for the serine protease function of NS3. May have membrane-destabilizing activity and form viroporins. Displays three enzymatic activities: serine protease, NTPase and RNA helicase. NS3 serine protease, in association with NS2B, performs its autocleavage and cleaves the polyprotein at dibasic sites in the cytoplasm: C-prM, NS2A-NS2B, NS2B-NS3, NS3-NS4A, NS4A-2K and NS4B-NS5. NS3 RNA helicase binds RNA and unwinds dsRNA in the 3' to 5' direction. Also plays a role in virus assembly. In terms of biological role, regulates the ATPase activity of the NS3 helicase activity. NS4A allows NS3 helicase to conserve energy during unwinding. Its function is as follows. Functions as a signal peptide for NS4B and is required for the interferon antagonism activity of the latter. Functionally, induces the formation of ER-derived membrane vesicles where the viral replication takes place. Inhibits interferon (IFN)-induced host STAT1 phosphorylation and nuclear translocation, thereby preventing the establishment of cellular antiviral state by blocking the IFN-alpha/beta pathway. Replicates the viral (+) and (-) RNA genome, and performs the capping of genomes in the cytoplasm. NS5 methylates viral RNA cap at guanine N-7 and ribose 2'-O positions. Besides its role in RNA genome replication, also prevents the establishment of cellular antiviral state by blocking the interferon-alpha/beta (IFN-alpha/beta) signaling pathway. IFN-I induces binding of NS5 to host IFN-activated transcription factor STAT2, preventing its transcriptional activity. Host TRIM23 is the E3 ligase that interacts with and polyubiquitinates NS5 to promote its binding to STAT2 and trigger IFN-I signaling inhibition. This is Genome polyprotein from Banzi virus (BANV).